The primary structure comprises 676 residues: Head-specific guanylate cyclase (676 aa).

Residues 466 to 593 (TILFSDIVGF…HSVTIANKFE (128 aa)) form the Guanylate cyclase domain.

The protein belongs to the adenylyl cyclase class-4/guanylyl cyclase family. As to quaternary structure, heterodimer. Head, where it is preferentially expressed in the CNS and the retina. Not found in bodies.

The protein localises to the cytoplasm. It carries out the reaction GTP = 3',5'-cyclic GMP + diphosphate. May have a role in phototransduction. Catalyzes the conversion of GTP to cGMP, a common second messenger that is utilized in a wide variety of cells and signal transduction pathways. A second subunit is required for enzyme activity. The sequence is that of Head-specific guanylate cyclase (Gycalpha99B) from Drosophila melanogaster (Fruit fly).